The chain runs to 607 residues: uncharacterized protein (607 aa).

A DNA-binding region (zn(2)-C6 fungal-type) is located at residues 16–44 (CTVCRKRKLKCDGNKPCGRCIRLNTPKEC).

Its subcellular location is the nucleus. This is an uncharacterized protein from Saccharomyces cerevisiae (strain ATCC 204508 / S288c) (Baker's yeast).